Consider the following 90-residue polypeptide: Putative membrane protein insertion efficiency factor (90 aa).

Belongs to the UPF0161 family.

The protein localises to the cell membrane. Its function is as follows. Could be involved in insertion of integral membrane proteins into the membrane. The chain is Putative membrane protein insertion efficiency factor from Lactococcus lactis subsp. cremoris (strain SK11).